A 339-amino-acid polypeptide reads, in one-letter code: Ketol-acid reductoisomerase (NADP(+)) (339 aa).

The KARI N-terminal Rossmann domain maps to M1–T182. NADP(+)-binding positions include Y24–Q27, R48, S51, T53, and D83–Q86. Residue H108 is part of the active site. G134 is a binding site for NADP(+). The KARI C-terminal knotted domain occupies S183–I328. Residues D191, E195, E227, and E231 each contribute to the Mg(2+) site. S252 contributes to the substrate binding site.

Belongs to the ketol-acid reductoisomerase family. Mg(2+) is required as a cofactor.

The enzyme catalyses (2R)-2,3-dihydroxy-3-methylbutanoate + NADP(+) = (2S)-2-acetolactate + NADPH + H(+). The catalysed reaction is (2R,3R)-2,3-dihydroxy-3-methylpentanoate + NADP(+) = (S)-2-ethyl-2-hydroxy-3-oxobutanoate + NADPH + H(+). It participates in amino-acid biosynthesis; L-isoleucine biosynthesis; L-isoleucine from 2-oxobutanoate: step 2/4. It functions in the pathway amino-acid biosynthesis; L-valine biosynthesis; L-valine from pyruvate: step 2/4. In terms of biological role, involved in the biosynthesis of branched-chain amino acids (BCAA). Catalyzes an alkyl-migration followed by a ketol-acid reduction of (S)-2-acetolactate (S2AL) to yield (R)-2,3-dihydroxy-isovalerate. In the isomerase reaction, S2AL is rearranged via a Mg-dependent methyl migration to produce 3-hydroxy-3-methyl-2-ketobutyrate (HMKB). In the reductase reaction, this 2-ketoacid undergoes a metal-dependent reduction by NADPH to yield (R)-2,3-dihydroxy-isovalerate. The polypeptide is Ketol-acid reductoisomerase (NADP(+)) (Paramagnetospirillum magneticum (strain ATCC 700264 / AMB-1) (Magnetospirillum magneticum)).